Here is a 232-residue protein sequence, read N- to C-terminus: Fibrillarin-like rRNA/tRNA 2'-O-methyltransferase (232 aa).

S-adenosyl-L-methionine is bound by residues 89–90 (TT), 108–109 (EF), 133–134 (DA), and 153–156 (DIAQ).

It belongs to the methyltransferase superfamily. Fibrillarin family. As to quaternary structure, interacts with nop5. Component of box C/D small ribonucleoprotein (sRNP) particles that contain rpl7ae, FlpA and nop5, plus a guide RNA.

Functionally, involved in pre-rRNA and tRNA processing. Utilizes the methyl donor S-adenosyl-L-methionine to catalyze the site-specific 2'-hydroxyl methylation of ribose moieties in rRNA and tRNA. Site specificity is provided by a guide RNA that base pairs with the substrate. Methylation occurs at a characteristic distance from the sequence involved in base pairing with the guide RNA. This is Fibrillarin-like rRNA/tRNA 2'-O-methyltransferase from Saccharolobus islandicus (strain M.16.27) (Sulfolobus islandicus).